Here is a 525-residue protein sequence, read N- to C-terminus: Ribosomal protein uS12 methylthiotransferase RimO (525 aa).

The span at 1 to 20 shows a compositional bias: polar residues; the sequence is MPKISTESVNTTIAPSQPAS. Positions 1–44 are disordered; sequence MPKISTESVNTTIAPSQPASTAPKDTATLFNPAKPTATPAQSSI. Residues 82–192 form the MTTase N-terminal domain; that stretch reads PKIGFVSLGC…VIRAVALHVP (111 aa). The [4Fe-4S] cluster site is built by Cys-91, Cys-127, Cys-156, Cys-230, Cys-234, and Cys-237. A Radical SAM core domain is found at 216–453; it reads LTPSHYAYLK…MTLQQDISAQ (238 aa). The 70-residue stretch at 456–525 folds into the TRAM domain; the sequence is QEKIGKTLMV…EYDLFASYQA (70 aa).

This sequence belongs to the methylthiotransferase family. RimO subfamily. Requires [4Fe-4S] cluster as cofactor.

The protein resides in the cytoplasm. It catalyses the reaction L-aspartate(89)-[ribosomal protein uS12]-hydrogen + (sulfur carrier)-SH + AH2 + 2 S-adenosyl-L-methionine = 3-methylsulfanyl-L-aspartate(89)-[ribosomal protein uS12]-hydrogen + (sulfur carrier)-H + 5'-deoxyadenosine + L-methionine + A + S-adenosyl-L-homocysteine + 2 H(+). In terms of biological role, catalyzes the methylthiolation of an aspartic acid residue of ribosomal protein uS12. This chain is Ribosomal protein uS12 methylthiotransferase RimO, found in Psychrobacter arcticus (strain DSM 17307 / VKM B-2377 / 273-4).